The chain runs to 210 residues: Na(+)-translocating NADH-quinone reductase subunit D (210 aa).

5 helical membrane passes run 42–62 (FVMT…ISLI), 72–92 (IIAQ…VLKA), 103–123 (VFVG…AYAM), 131–151 (FLDG…VATV), and 178–198 (NGLL…IWGV).

It belongs to the NqrDE/RnfAE family. In terms of assembly, composed of six subunits; NqrA, NqrB, NqrC, NqrD, NqrE and NqrF.

It localises to the cell inner membrane. The catalysed reaction is a ubiquinone + n Na(+)(in) + NADH + H(+) = a ubiquinol + n Na(+)(out) + NAD(+). In terms of biological role, NQR complex catalyzes the reduction of ubiquinone-1 to ubiquinol by two successive reactions, coupled with the transport of Na(+) ions from the cytoplasm to the periplasm. NqrA to NqrE are probably involved in the second step, the conversion of ubisemiquinone to ubiquinol. This is Na(+)-translocating NADH-quinone reductase subunit D from Aeromonas hydrophila subsp. hydrophila (strain ATCC 7966 / DSM 30187 / BCRC 13018 / CCUG 14551 / JCM 1027 / KCTC 2358 / NCIMB 9240 / NCTC 8049).